We begin with the raw amino-acid sequence, 470 residues long: tRNA modification GTPase MnmE (470 aa).

Residues Arg24, Glu81, and Lys122 each contribute to the (6S)-5-formyl-5,6,7,8-tetrahydrofolate site. The 166-residue stretch at 218–383 (GIKIVIAGKP…LQEYLSNNIK (166 aa)) folds into the TrmE-type G domain. Asn228 contacts K(+). GTP is bound by residues 228-233 (NAGKSS), 247-253 (STISGTT), and 272-275 (DTAG). Ser232 is a binding site for Mg(2+). K(+) contacts are provided by Ser247, Ile249, and Thr252. Thr253 provides a ligand contact to Mg(2+). A (6S)-5-formyl-5,6,7,8-tetrahydrofolate-binding site is contributed by Lys470.

It belongs to the TRAFAC class TrmE-Era-EngA-EngB-Septin-like GTPase superfamily. TrmE GTPase family. As to quaternary structure, homodimer. Heterotetramer of two MnmE and two MnmG subunits. Requires K(+) as cofactor.

The protein resides in the cytoplasm. Exhibits a very high intrinsic GTPase hydrolysis rate. Involved in the addition of a carboxymethylaminomethyl (cmnm) group at the wobble position (U34) of certain tRNAs, forming tRNA-cmnm(5)s(2)U34. The protein is tRNA modification GTPase MnmE of Blochmanniella pennsylvanica (strain BPEN).